The primary structure comprises 289 residues: Rhodopsin (289 aa).

Over Tyr-1–Ala-7 the chain is Extracellular. The helical transmembrane segment at Tyr-8–Val-32 threads the bilayer. The Cytoplasmic portion of the chain corresponds to Thr-33–Asn-44. Residues Tyr-45–Tyr-67 traverse the membrane as a helical segment. Topologically, residues Thr-68–Cys-81 are extracellular. Residues Cys-81 and Cys-158 are joined by a disulfide bond. A helical transmembrane segment spans residues Asn-82–Ile-104. The 'Ionic lock' involved in activated form stabilization motif lies at Glu-105–Trp-107. Residues Glu-105–His-123 are Cytoplasmic-facing. A helical transmembrane segment spans residues Ala-124–Val-144. Over Gly-145–Ser-173 the chain is Extracellular. Asn-171 is a glycosylation site (N-linked (GlcNAc...) asparagine). A helical transmembrane segment spans residues Phe-174 to Gly-195. Over Arg-196–Arg-223 the chain is Cytoplasmic. A helical membrane pass occupies residues Met-224–Trp-245. At Ile-246–Ile-257 the chain is on the extracellular side. The chain crosses the membrane as a helical span at residues Phe-258 to Cys-279. Residue Lys-267 is modified to N6-(retinylidene)lysine. Residues Met-280–Ile-289 are Cytoplasmic-facing.

Belongs to the G-protein coupled receptor 1 family. Opsin subfamily. In terms of processing, phosphorylated on some or all of the serine and threonine residues present in the C-terminal region. Post-translationally, contains one covalently linked retinal chromophore.

It localises to the membrane. The protein localises to the cell projection. Its subcellular location is the cilium. The protein resides in the photoreceptor outer segment. Photoreceptor required for image-forming vision at low light intensity. While most salt water fish species use retinal as chromophore, most freshwater fish use 3-dehydroretinal, or a mixture of retinal and 3-dehydroretinal. Light-induced isomerization of 11-cis to all-trans retinal triggers a conformational change that activates signaling via G-proteins. Subsequent receptor phosphorylation mediates displacement of the bound G-protein alpha subunit by arrestin and terminates signaling. The sequence is that of Rhodopsin (rho) from Abyssocottus korotneffi (Baikalian deep-water sculpin).